Here is a 311-residue protein sequence, read N- to C-terminus: Aspartate carbamoyltransferase catalytic subunit (311 aa).

Carbamoyl phosphate contacts are provided by arginine 55 and threonine 56. An L-aspartate-binding site is contributed by lysine 85. Carbamoyl phosphate is bound by residues arginine 106, histidine 135, and glutamine 138. 2 residues coordinate L-aspartate: arginine 168 and arginine 230. Leucine 268 and proline 269 together coordinate carbamoyl phosphate.

The protein belongs to the aspartate/ornithine carbamoyltransferase superfamily. ATCase family. In terms of assembly, heterododecamer (2C3:3R2) of six catalytic PyrB chains organized as two trimers (C3), and six regulatory PyrI chains organized as three dimers (R2).

It carries out the reaction carbamoyl phosphate + L-aspartate = N-carbamoyl-L-aspartate + phosphate + H(+). Its pathway is pyrimidine metabolism; UMP biosynthesis via de novo pathway; (S)-dihydroorotate from bicarbonate: step 2/3. Its function is as follows. Catalyzes the condensation of carbamoyl phosphate and aspartate to form carbamoyl aspartate and inorganic phosphate, the committed step in the de novo pyrimidine nucleotide biosynthesis pathway. This is Aspartate carbamoyltransferase catalytic subunit from Buchnera aphidicola subsp. Schizaphis graminum (strain Sg).